The primary structure comprises 371 residues: tRNA-specific 2-thiouridylase MnmA (371 aa).

Residues 13–20 (GMSGGVDS) and Met-39 each bind ATP. The tract at residues 99–101 (NPD) is interaction with target base in tRNA. Residue Cys-104 is the Nucleophile of the active site. Cys-104 and Cys-200 are joined by a disulfide. Gly-128 lines the ATP pocket. Residues 150–152 (KDQ) form an interaction with tRNA region. Cys-200 acts as the Cysteine persulfide intermediate in catalysis. The segment at 308-309 (RY) is interaction with tRNA.

Belongs to the MnmA/TRMU family.

It localises to the cytoplasm. The enzyme catalyses S-sulfanyl-L-cysteinyl-[protein] + uridine(34) in tRNA + AH2 + ATP = 2-thiouridine(34) in tRNA + L-cysteinyl-[protein] + A + AMP + diphosphate + H(+). Catalyzes the 2-thiolation of uridine at the wobble position (U34) of tRNA, leading to the formation of s(2)U34. The chain is tRNA-specific 2-thiouridylase MnmA from Bacillus mycoides (strain KBAB4) (Bacillus weihenstephanensis).